Consider the following 159-residue polypeptide: Ribonuclease H (159 aa).

Positions Met1–Gln142 constitute an RNase H type-1 domain. Mg(2+)-binding residues include Asp10, Glu48, Asp70, and Asp134. The interval Glu135 to Thr159 is disordered. Basic and acidic residues predominate over residues Thr145 to Thr159.

Belongs to the RNase H family. In terms of assembly, monomer. The cofactor is Mg(2+).

The protein resides in the cytoplasm. It carries out the reaction Endonucleolytic cleavage to 5'-phosphomonoester.. Functionally, endonuclease that specifically degrades the RNA of RNA-DNA hybrids. The protein is Ribonuclease H of Proteus mirabilis (strain HI4320).